Here is a 158-residue protein sequence, read N- to C-terminus: 6,7-dimethyl-8-ribityllumazine synthase (158 aa).

5-amino-6-(D-ribitylamino)uracil is bound by residues Phe-23, Ser-61–Glu-63, and Ala-85–Ile-87. Residue Glu-90–Thr-91 coordinates (2S)-2-hydroxy-3-oxobutyl phosphate. Catalysis depends on His-93, which acts as the Proton donor. Phe-118 lines the 5-amino-6-(D-ribitylamino)uracil pocket. Arg-132 provides a ligand contact to (2S)-2-hydroxy-3-oxobutyl phosphate.

The protein belongs to the DMRL synthase family.

The enzyme catalyses (2S)-2-hydroxy-3-oxobutyl phosphate + 5-amino-6-(D-ribitylamino)uracil = 6,7-dimethyl-8-(1-D-ribityl)lumazine + phosphate + 2 H2O + H(+). It functions in the pathway cofactor biosynthesis; riboflavin biosynthesis; riboflavin from 2-hydroxy-3-oxobutyl phosphate and 5-amino-6-(D-ribitylamino)uracil: step 1/2. Its function is as follows. Catalyzes the formation of 6,7-dimethyl-8-ribityllumazine by condensation of 5-amino-6-(D-ribitylamino)uracil with 3,4-dihydroxy-2-butanone 4-phosphate. This is the penultimate step in the biosynthesis of riboflavin. The chain is 6,7-dimethyl-8-ribityllumazine synthase from Prochlorococcus marinus (strain MIT 9312).